The sequence spans 711 residues: Protein ACTIVITY OF BC1 COMPLEX KINASE 3, chloroplastic (711 aa).

Residues 1–42 constitute a chloroplast transit peptide; it reads MSLVVGQSLGLTLVGDGLSLRNSKINVGKSKFFSVNRRRLAR. Residues 216–546 form the Protein kinase domain; the sequence is SVSPEPIAAA…IELLFKDGKF (331 aa). ATP-binding positions include 222-230 and K245; that span reads IAAASLGQV. Catalysis depends on D379, which acts as the Proton acceptor.

The protein belongs to the protein kinase superfamily. ADCK protein kinase family. Interacts with ABC1K1 in plastoglobules (PG). Interacts with PGM48.

Its subcellular location is the plastid. It localises to the chloroplast. The protein localises to the plastoglobule. The catalysed reaction is L-seryl-[protein] + ATP = O-phospho-L-seryl-[protein] + ADP + H(+). It catalyses the reaction L-threonyl-[protein] + ATP = O-phospho-L-threonyl-[protein] + ADP + H(+). Kinase that can phosphorylate the tocopherol cyclase VTE1, a key enzyme of tocopherol (vitamin E) metabolism and involved in the recycling of oxidated alpha-tocopherol quinone, possibly stabilizing it at plastoglobules. Also regulates membrane prenylquinone composition. Required for photooxidative stress responses to prevent photosystem II core and chlorophyll degradations. Together with ABC1K1, contributes to plastoglobule (PG) function in prenyl-lipid metabolism, stress response, and thylakoid remodeling. Promotes photodamage of chloroplasts under continuous red light, thus working in opposition to ABC1K1. The polypeptide is Protein ACTIVITY OF BC1 COMPLEX KINASE 3, chloroplastic (Arabidopsis thaliana (Mouse-ear cress)).